A 417-amino-acid chain; its full sequence is Transmembrane protease serine 11G (417 aa).

The Cytoplasmic segment spans residues M1–L21. The helical; Signal-anchor for type II membrane protein transmembrane segment at I22–V42 threads the bilayer. Topologically, residues Y43–I417 are extracellular. The SEA domain occupies K46–Q165. N60 carries N-linked (GlcNAc...) asparagine glycosylation. Residues I186–S416 enclose the Peptidase S1 domain. A disulfide bridge connects residues C211 and C227. Catalysis depends on charge relay system residues H226 and D271. 2 disulfide bridges follow: C336/C352 and C363/C392. S367 (charge relay system) is an active-site residue.

The protein belongs to the peptidase S1 family.

It is found in the membrane. In Mus musculus (Mouse), this protein is Transmembrane protease serine 11G (Tmprss11g).